Consider the following 285-residue polypeptide: 2-dehydro-3-deoxyphosphooctonate aldolase (285 aa).

This sequence belongs to the KdsA family.

Its subcellular location is the cytoplasm. It carries out the reaction D-arabinose 5-phosphate + phosphoenolpyruvate + H2O = 3-deoxy-alpha-D-manno-2-octulosonate-8-phosphate + phosphate. Its pathway is carbohydrate biosynthesis; 3-deoxy-D-manno-octulosonate biosynthesis; 3-deoxy-D-manno-octulosonate from D-ribulose 5-phosphate: step 2/3. It functions in the pathway bacterial outer membrane biogenesis; lipopolysaccharide biosynthesis. The sequence is that of 2-dehydro-3-deoxyphosphooctonate aldolase from Variovorax paradoxus (strain S110).